Reading from the N-terminus, the 276-residue chain is DNA repair protein RecO (276 aa).

It belongs to the RecO family.

Involved in DNA repair and RecF pathway recombination. The chain is DNA repair protein RecO from Mycobacterium sp. (strain JLS).